Here is a 95-residue protein sequence, read N- to C-terminus: MASETVSNHQEKALALLQADAEKILRLIKVQMDHLTMPQCPLYEEVLDTQMFGLSREVDFAVRLGLIAEEQGKVMLGELERELSALHEAFTNKQQ.

The protein belongs to the UPF0358 family.

The chain is UPF0358 protein BA_4159/GBAA_4159/BAS3861 from Bacillus anthracis.